The following is a 228-amino-acid chain: MATAEMEKTTTFDEAEKVKLNANEADDEVEEGEIVEETDDTTSYLSKEIATKHPLEHSWTFWFDNPVAKSKQAAWGSSLRNVYTFSTVEDFWGAYNNIHHPSKLVVGADLHCFKHKIEPKWEDPVCANGGTWKMSFSKGKSDTSWLYTLLAMIGHQFDHEDEICGAVVSVRGKGEKISLWTKNAANETAQVSIGKQWKQFLDYSDSVGFIFHDDAKRLDRNAKNRYTV.

Residues 1 to 19 show a composition bias toward basic and acidic residues; that stretch reads MATAEMEKTTTFDEAEKVK. The tract at residues 1–33 is disordered; that stretch reads MATAEMEKTTTFDEAEKVKLNANEADDEVEEGE. The segment covering 24–33 has biased composition (acidic residues); it reads EADDEVEEGE. EIF4G-binding regions lie at residues 53–56 and 63–99; these read HPLE and FDNP…NNIH. Residues 71-76, Lys103, and 121-122 contribute to the mRNA site; these read KQAAWG and WE. A disulfide bridge links Cys126 with Cys164. Residues 147 to 156 are EIF4G-binding; the sequence is YTLLAMIGHQ. Residues 171–176 and 216–220 contribute to the mRNA site; these read RGKGEK and KRLDR.

Belongs to the eukaryotic initiation factor 4E family. In terms of assembly, EIF4F is a multi-subunit complex, the composition of which varies with external and internal environmental conditions. It is composed of at least EIF4A, EIF4E and EIF4G. EIF4E is also known to interact with other partners. In higher plants two isoforms of EIF4F have been identified, named isoform EIF4F and isoform EIF(iso)4F. Isoform EIF4F has subunits p220 and p26, whereas isoform EIF(iso)4F has subunits p82 and p28. As to quaternary structure, (Microbial infection) Interacts with potyvirus viral genome-linked protein (VPg); this interaction is possible in susceptible hosts but is impaired in resistant plants. Thus the VPg of tobacco etch virus (TEV) strain HAT interacts with susceptible alleles pvr2(+), pvr2(3) and pvr2(9) but not with the resistant allele pvr2(2), the VPg of TEV strain CAA10 interacts with susceptible alleles pvr2(+), pvr2(2), pvr2(3) and pvr2(9), the VPg of potato virus Y (PVY) strain LYE84 interacts with tomato eIF4E1 and eIF4E2 as well as with the Capsicum annuum eIF4E1 susceptible allele pvr2(+) but not with resistant alleles pvr2(1), pvr2(2), pvr2(3), pvr2(4), pvr2(5), pvr2(6), pvr2(7), pvr2(8) and pvr2(9) and the VPg of PVY strain SON41 interacts with C.annuum eIF4E1 susceptible alleles pvr2(+), pvr2(1), pvr2(2), pvr2(3) and pvr2(4) but not with resistant alleles pvr2(5), pvr2(6), pvr2(7), pvr2(8) and pvr2(9). In addition, the susceptible allele pvr1(+) interacts strongly with TEV strains HAT and NW VPg while resistance alleles (pvr1, pvr1(1), and pvr1(2)) fail to bind TEV VPg. According to the redox status, the Cys-126-Cys-164 disulfide bridge may have a role in regulating protein function by affecting its ability to bind capped mRNA.

The protein resides in the nucleus. The protein localises to the cytoplasm. Its function is as follows. Component of the protein complex eIF4F, which is involved in the recognition of the mRNA cap, ATP-dependent unwinding of 5'-terminal secondary structure and recruitment of mRNA to the ribosome. Recognizes and binds the 7-methylguanosine-containing mRNA cap during an early step in the initiation of protein synthesis and facilitates ribosome binding by inducing the unwinding of the mRNAs secondary structures. Key component of recessive resistance to potyviruses. (Microbial infection) Susceptibility host factor required for viral infection (e.g. potato virus Y (PVY) and tobacco etch virus (TEV)) by recruiting viral RNAs to the host ribosomal complex via an interaction with viral genome-linked protein (VPg). In Capsicum annuum (Capsicum pepper), this protein is Eukaryotic translation initiation factor 4E-1.